The following is a 93-amino-acid chain: CRISPR-associated endoribonuclease Cas2 1 (93 aa).

Asp8 is a Mg(2+) binding site.

It belongs to the CRISPR-associated endoribonuclease Cas2 protein family. As to quaternary structure, homodimer, forms a heterotetramer with a Cas1 homodimer. The cofactor is Mg(2+).

CRISPR (clustered regularly interspaced short palindromic repeat), is an adaptive immune system that provides protection against mobile genetic elements (viruses, transposable elements and conjugative plasmids). CRISPR clusters contain sequences complementary to antecedent mobile elements and target invading nucleic acids. CRISPR clusters are transcribed and processed into CRISPR RNA (crRNA). Functions as a ssRNA-specific endoribonuclease. Involved in the integration of spacer DNA into the CRISPR cassette. In Chloroflexus aurantiacus (strain ATCC 29366 / DSM 635 / J-10-fl), this protein is CRISPR-associated endoribonuclease Cas2 1.